The following is a 248-amino-acid chain: UPF0736 protein Bcer98_0893 (248 aa).

It belongs to the UPF0736 family.

In Bacillus cytotoxicus (strain DSM 22905 / CIP 110041 / 391-98 / NVH 391-98), this protein is UPF0736 protein Bcer98_0893.